A 314-amino-acid chain; its full sequence is MVASLIKRAKATSLRSLFQKNEMNFQSIRFNIHQFSTQPALRSEGSELIFGGRSFDSLLSSIKETMEEKKKKSSSFEKRDKRRVQLKEKSPLRTPRNRTQIIDARSTRKDTENESLRKNNFKRRTQFAFTGRATKSNAGVMDVQSPSTMSTSKNNVRNAERPASKKPVFGSKKYFDVINDSNVENKEETKDRNLDRALSKFTQSREKNEQNLSSKASVLRNKKSILLKKRNQDETQLTTEEDFSANNDSTAKIETSIHDHRDISRITPFELPFVNPKLFASFTPMSVALPAGRLLLIKQLQEKSTQSSSMTGLK.

Basic and acidic residues predominate over residues 68–91 (EKKKKSSSFEKRDKRRVQLKEKSP). 2 disordered regions span residues 68–97 (EKKKKSSSFEKRDKRRVQLKEKSPLRTPRN) and 141–164 (MDVQSPSTMSTSKNNVRNAERPAS). Polar residues predominate over residues 144–157 (QSPSTMSTSKNNVR).

It is found in the mitochondrion. This is an uncharacterized protein from Schizosaccharomyces pombe (strain 972 / ATCC 24843) (Fission yeast).